The following is a 248-amino-acid chain: 2,3-bisphosphoglycerate-dependent phosphoglycerate mutase (248 aa).

Residues 8–15 (RHGESEWN), 21–22 (TG), Arg-60, 87–90 (ERHY), Lys-98, 114–115 (RR), and 183–184 (GN) contribute to the substrate site. His-9 functions as the Tele-phosphohistidine intermediate in the catalytic mechanism. The Proton donor/acceptor role is filled by Glu-87.

Belongs to the phosphoglycerate mutase family. BPG-dependent PGAM subfamily.

It carries out the reaction (2R)-2-phosphoglycerate = (2R)-3-phosphoglycerate. Its pathway is carbohydrate degradation; glycolysis; pyruvate from D-glyceraldehyde 3-phosphate: step 3/5. Its function is as follows. Catalyzes the interconversion of 2-phosphoglycerate and 3-phosphoglycerate. The chain is 2,3-bisphosphoglycerate-dependent phosphoglycerate mutase from Borrelia turicatae (strain 91E135).